A 254-amino-acid polypeptide reads, in one-letter code: MAEEVWVGTWRPHRPRGPIMALYSSPGPKYLIPPTTGFVKQTPTKLRAPAYSFRGAPMLLAENCSPGPRYSVNPKILRTGKDLGPAYSILGRYHTKTTLTPGPGDYFPEKSTKHVFDSAPSHSISARTKTFRVDSTPGPAAYMLPMVMGPHTIGKVSQPSFSIKGRSKLGSFSDDLHKTPGPAAYRQTDVQVTKFKAPQYTMAARVEPPGDKTLKPGPGAHSPEKVTMTRPCAPVVSFGIKHSDYMTPLVVDVD.

STPGR repeat units lie at residues 180 to 205 (PGPA…MAAR) and 216 to 241 (PGPG…FGIK). Residues 207 to 226 (EPPGDKTLKPGPGAHSPEKV) are disordered.

Belongs to the CIMAP family. As to quaternary structure, microtubule inner protein component of sperm flagellar doublet microtubules.

It localises to the cytoplasm. It is found in the cytoskeleton. The protein localises to the flagellum axoneme. Outer dense fibers are filamentous structures located on the outside of the axoneme in the midpiece and principal piece of the mammalian sperm tail. May help to maintain the passive elastic structures and elastic recoil of the sperm tail. This chain is Ciliary microtubule associated protein 1A (CIMAP1A), found in Bos taurus (Bovine).